We begin with the raw amino-acid sequence, 423 residues long: Histidine--tRNA ligase (423 aa).

The protein belongs to the class-II aminoacyl-tRNA synthetase family. In terms of assembly, homodimer.

Its subcellular location is the cytoplasm. It carries out the reaction tRNA(His) + L-histidine + ATP = L-histidyl-tRNA(His) + AMP + diphosphate + H(+). This is Histidine--tRNA ligase from Shewanella loihica (strain ATCC BAA-1088 / PV-4).